The sequence spans 388 residues: Chorismate synthase (388 aa).

Residues Arg-39 and Arg-45 each contribute to the NADP(+) site. FMN-binding positions include 130–132 (RSS), 251–252 (NA), Gly-296, 311–315 (KPIPT), and Arg-337.

It belongs to the chorismate synthase family. As to quaternary structure, homotetramer. FMNH2 serves as cofactor.

It carries out the reaction 5-O-(1-carboxyvinyl)-3-phosphoshikimate = chorismate + phosphate. The protein operates within metabolic intermediate biosynthesis; chorismate biosynthesis; chorismate from D-erythrose 4-phosphate and phosphoenolpyruvate: step 7/7. Functionally, catalyzes the anti-1,4-elimination of the C-3 phosphate and the C-6 proR hydrogen from 5-enolpyruvylshikimate-3-phosphate (EPSP) to yield chorismate, which is the branch point compound that serves as the starting substrate for the three terminal pathways of aromatic amino acid biosynthesis. This reaction introduces a second double bond into the aromatic ring system. This chain is Chorismate synthase, found in Streptococcus pyogenes serotype M6 (strain ATCC BAA-946 / MGAS10394).